Consider the following 490-residue polypeptide: Glutamate--tRNA ligase (490 aa).

The 'HIGH' region motif lies at P13–L23. Positions K257–R261 match the 'KMSKS' region motif. K260 is a binding site for ATP.

This sequence belongs to the class-I aminoacyl-tRNA synthetase family. Glutamate--tRNA ligase type 1 subfamily. As to quaternary structure, monomer.

The protein resides in the cytoplasm. It carries out the reaction tRNA(Glu) + L-glutamate + ATP = L-glutamyl-tRNA(Glu) + AMP + diphosphate. Its function is as follows. Catalyzes the attachment of glutamate to tRNA(Glu) in a two-step reaction: glutamate is first activated by ATP to form Glu-AMP and then transferred to the acceptor end of tRNA(Glu). The polypeptide is Glutamate--tRNA ligase (Mycobacterium tuberculosis (strain ATCC 25177 / H37Ra)).